The sequence spans 1332 residues: Sister chromatid cohesion protein PDS5 homolog A (1332 aa).

Met1 is subject to N-acetylmethionine. One copy of the HEAT repeat lies at 392-428 (ALVNDQLLGFVRERTLDKRWRVRKEAMMGLAQLYKKY). Phosphoserine is present on Ser1096. The segment at 1138-1332 (GVLGTVNKPL…PAERQIDLQR (195 aa)) is disordered. Position 1145 is an N6-acetyllysine (Lys1145). The segment covering 1160 to 1173 (GTETGSNINANSEL) has biased composition (polar residues). Phosphoserine occurs at positions 1174 and 1194. A Phosphothreonine modification is found at Thr1207. Lys1210 is subject to N6-acetyllysine. The span at 1222-1232 (SDQSTQGNISS) shows a compositional bias: polar residues. An N6-acetyllysine modification is found at Lys1288. At Ser1303 the chain carries Phosphoserine. Over residues 1316 to 1332 (DGAKKAVPAERQIDLQR) the composition is skewed to basic and acidic residues.

This sequence belongs to the PDS5 family. Interacts with the cohesin complex. Interacts with WAPL (via FGF motifs) or CDCA5 (via the FGF motif); the interaction is direct, cohesin-dependent and competitive. Interacts with SMC3. Interacts with TP63.

Its subcellular location is the nucleus. Functionally, probable regulator of sister chromatid cohesion in mitosis which may stabilize cohesin complex association with chromatin. May couple sister chromatid cohesion during mitosis to DNA replication. Cohesion ensures that chromosome partitioning is accurate in both meiotic and mitotic cells and plays an important role in DNA repair. In Mus musculus (Mouse), this protein is Sister chromatid cohesion protein PDS5 homolog A (Pds5a).